The primary structure comprises 316 residues: protein SLOW GREEN 1, chloroplastic (316 aa).

A chloroplast-targeting transit peptide spans 1–39 (MISSLSASSSLVSSFVAVKATPVTGPLIPRRDLLSIRIR). TPR repeat units follow at residues 118–151 (VETLRSLLQQKLEKGEDEEALKLLERLVAAQPEE), 152–185 (TEWKFLMARLLGEMGRPENARQMFEEILQRNPLS), 226–259 (RDVRLIIAQIHFLQKNVDEALKSYEQLTKEDPKD), and 261–293 (RPYFCRGMIYSLLDKNVEAKEQFAKYRELSPKK).

As to expression, ubiquitous. Preferentially expressed in newly formed green tissues.

Its subcellular location is the plastid. It localises to the chloroplast. Its function is as follows. Required for the early stage of chloroplast development. May be involved in chloroplast protein biosynthesis and/or degradation. This is protein SLOW GREEN 1, chloroplastic from Arabidopsis thaliana (Mouse-ear cress).